We begin with the raw amino-acid sequence, 147 residues long: MGHFTEEDKATITSLWGKVNVEDAGGETLGRLLVVYPWTQRFFDSFGNLSSASAIMGNPKVKAHGKKVLTSLGDATKHLDDLKGTFAQLSELHCDKLHVDPENFKLLGNVLVTVLAIHFGKEFTPEVQASWQKMVTAVASALSSRYH.

Gly2 bears the N-acetylglycine; in form Hb F1 mark. Positions 3–147 (HFTEEDKATI…VASALSSRYH (145 aa)) constitute a Globin domain. Thr13 bears the Phosphothreonine mark. Residues Ser45, Ser51, and Ser53 each carry the phosphoserine modification. N6-acetyllysine is present on Lys60. Position 64 (His64) interacts with heme b. N6-acetyllysine is present on Lys83. His93 contributes to the heme b binding site. An S-nitrosocysteine modification is found at Cys94. Ser140 is modified (phosphoserine).

This sequence belongs to the globin family. In terms of assembly, heterotetramer of two alpha chains and two gamma chains in fetal hemoglobin (Hb F). In the case of deletions affecting one or more of the alpha chains, the excess gamma chains form homotetramers that exhibit neither Bohr effect nor heme-heme cooperativity (hemoglobin Bart's). Post-translationally, acetylation of Gly-2 converts Hb F to the minor Hb F1. As to expression, red blood cells.

Functionally, gamma chains make up the fetal hemoglobin F, in combination with alpha chains. This is Hemoglobin subunit gamma-1 (HBG1) from Homo sapiens (Human).